A 579-amino-acid polypeptide reads, in one-letter code: Putative adenine deaminase OB0751 (579 aa).

The protein belongs to the metallo-dependent hydrolases superfamily. Adenine deaminase family.

The catalysed reaction is adenine + H2O + H(+) = hypoxanthine + NH4(+). The sequence is that of Putative adenine deaminase OB0751 from Oceanobacillus iheyensis (strain DSM 14371 / CIP 107618 / JCM 11309 / KCTC 3954 / HTE831).